We begin with the raw amino-acid sequence, 210 residues long: HTH-type transcriptional repressor FabR (210 aa).

Residues 10-70 form the HTH tetR-type domain; sequence KTRRSLVEAA…TMVDESGLML (61 aa). The H-T-H motif DNA-binding region spans 33-52; sequence SLREVAREAGIAPTSFYRHF.

In terms of assembly, homodimer.

The protein localises to the cytoplasm. Its function is as follows. Represses the transcription of fabB, involved in unsaturated fatty acid (UFA) biosynthesis. By controlling UFA production, FabR directly influences the physical properties of the membrane bilayer. The polypeptide is HTH-type transcriptional repressor FabR (Klebsiella pneumoniae subsp. pneumoniae (strain ATCC 700721 / MGH 78578)).